The sequence spans 486 residues: Glutamyl-tRNA(Gln) amidotransferase subunit A (486 aa).

Active-site charge relay system residues include lysine 80 and serine 155. Serine 179 acts as the Acyl-ester intermediate in catalysis.

It belongs to the amidase family. GatA subfamily. Heterotrimer of A, B and C subunits.

It carries out the reaction L-glutamyl-tRNA(Gln) + L-glutamine + ATP + H2O = L-glutaminyl-tRNA(Gln) + L-glutamate + ADP + phosphate + H(+). Its function is as follows. Allows the formation of correctly charged Gln-tRNA(Gln) through the transamidation of misacylated Glu-tRNA(Gln) in organisms which lack glutaminyl-tRNA synthetase. The reaction takes place in the presence of glutamine and ATP through an activated gamma-phospho-Glu-tRNA(Gln). This Geobacillus sp. (strain WCH70) protein is Glutamyl-tRNA(Gln) amidotransferase subunit A.